The chain runs to 160 residues: tRNA (cytidine(56)-2'-O)-methyltransferase (160 aa).

S-adenosyl-L-methionine-binding positions include Leu-68, 94 to 98 (GAEKV), and 112 to 119 (IGNQPHSE).

Belongs to the aTrm56 family. As to quaternary structure, homodimer.

It localises to the cytoplasm. The catalysed reaction is cytidine(56) in tRNA + S-adenosyl-L-methionine = 2'-O-methylcytidine(56) in tRNA + S-adenosyl-L-homocysteine + H(+). Its function is as follows. Specifically catalyzes the AdoMet-dependent 2'-O-ribose methylation of cytidine at position 56 in tRNAs. This Saccharolobus solfataricus (strain ATCC 35092 / DSM 1617 / JCM 11322 / P2) (Sulfolobus solfataricus) protein is tRNA (cytidine(56)-2'-O)-methyltransferase.